Consider the following 115-residue polypeptide: DNA-binding protein NP_4416A (115 aa).

The segment covering 1–11 has biased composition (acidic residues); the sequence is MSGEPTDEDLE. The disordered stretch occupies residues 1-46; that stretch reads MSGEPTDEDLEELRKKKMEQLKEQGGEGQSEAAEAQRQQAEAQKKA. Basic and acidic residues predominate over residues 12-25; that stretch reads ELRKKKMEQLKEQG. A compositionally biased stretch (low complexity) spans 29-41; sequence QSEAAEAQRQQAE.

This sequence belongs to the PDCD5 family.

The protein is DNA-binding protein NP_4416A of Natronomonas pharaonis (strain ATCC 35678 / DSM 2160 / CIP 103997 / JCM 8858 / NBRC 14720 / NCIMB 2260 / Gabara) (Halobacterium pharaonis).